Here is a 271-residue protein sequence, read N- to C-terminus: Expansin-B1 (271 aa).

Residues 1 to 24 (MQLFPVILPTLCVFLHLLISGSGS) form the signal peptide. Residues 58 to 169 (GGACGYGSLV…RRTACKYRGK (112 aa)) form the Expansin-like EG45 domain. 3 disulfides stabilise this stretch: cysteine 61–cysteine 90, cysteine 93–cysteine 164, and cysteine 98–cysteine 104. An Expansin-like CBD domain is found at 182-263 (YWLSLLIEYE…NWVPKATYTS (82 aa)). N-linked (GlcNAc...) asparagine glycosylation is present at asparagine 242.

The protein belongs to the expansin family. Expansin B subfamily.

The protein localises to the secreted. It localises to the cell wall. It is found in the membrane. Functionally, may cause loosening and extension of plant cell walls by disrupting non-covalent bonding between cellulose microfibrils and matrix glucans. No enzymatic activity has been found. The polypeptide is Expansin-B1 (EXPB1) (Arabidopsis thaliana (Mouse-ear cress)).